The sequence spans 732 residues: Phosphoribosylformylglycinamidine synthase subunit PurL (732 aa).

His32 is a catalytic residue. An ATP-binding site is contributed by Tyr35. Residue Glu81 participates in Mg(2+) binding. Substrate-binding positions include 82 to 85 (SHNH) and Arg104. Catalysis depends on His83, which acts as the Proton acceptor. Asp105 contacts Mg(2+). A substrate-binding site is contributed by Gln230. Asp258 contacts Mg(2+). Position 302 to 304 (302 to 304 (ESQ)) interacts with substrate. ATP is bound by residues Asp485 and Gly522. Asn523 is a Mg(2+) binding site. Ser525 provides a ligand contact to substrate.

This sequence belongs to the FGAMS family. As to quaternary structure, monomer. Part of the FGAM synthase complex composed of 1 PurL, 1 PurQ and 2 PurS subunits.

The protein resides in the cytoplasm. It catalyses the reaction N(2)-formyl-N(1)-(5-phospho-beta-D-ribosyl)glycinamide + L-glutamine + ATP + H2O = 2-formamido-N(1)-(5-O-phospho-beta-D-ribosyl)acetamidine + L-glutamate + ADP + phosphate + H(+). It functions in the pathway purine metabolism; IMP biosynthesis via de novo pathway; 5-amino-1-(5-phospho-D-ribosyl)imidazole from N(2)-formyl-N(1)-(5-phospho-D-ribosyl)glycinamide: step 1/2. In terms of biological role, part of the phosphoribosylformylglycinamidine synthase complex involved in the purines biosynthetic pathway. Catalyzes the ATP-dependent conversion of formylglycinamide ribonucleotide (FGAR) and glutamine to yield formylglycinamidine ribonucleotide (FGAM) and glutamate. The FGAM synthase complex is composed of three subunits. PurQ produces an ammonia molecule by converting glutamine to glutamate. PurL transfers the ammonia molecule to FGAR to form FGAM in an ATP-dependent manner. PurS interacts with PurQ and PurL and is thought to assist in the transfer of the ammonia molecule from PurQ to PurL. This is Phosphoribosylformylglycinamidine synthase subunit PurL from Methanococcus aeolicus (strain ATCC BAA-1280 / DSM 17508 / OCM 812 / Nankai-3).